Consider the following 149-residue polypeptide: Arginine repressor (149 aa).

The protein belongs to the ArgR family.

Its subcellular location is the cytoplasm. Its pathway is amino-acid biosynthesis; L-arginine biosynthesis [regulation]. Functionally, regulates arginine biosynthesis genes. In Alkaliphilus oremlandii (strain OhILAs) (Clostridium oremlandii (strain OhILAs)), this protein is Arginine repressor.